The primary structure comprises 361 residues: Cyclin-D3-3 (361 aa).

This sequence belongs to the cyclin family. Cyclin D subfamily.

Functionally, promotes divisions in the guard cells (GCs) after the guard mother cells (GMC) symmetric division. The chain is Cyclin-D3-3 (CYCD3-3) from Arabidopsis thaliana (Mouse-ear cress).